Here is a 270-residue protein sequence, read N- to C-terminus: Formamidopyrimidine-DNA glycosylase (270 aa).

P2 functions as the Schiff-base intermediate with DNA in the catalytic mechanism. E3 serves as the catalytic Proton donor. The active-site Proton donor; for beta-elimination activity is the K59. 3 residues coordinate DNA: H91, R110, and K151. The FPG-type zinc finger occupies 236–270 (RVYGRDKEPCVTCGQQVKSKVLGGRNTFWCSRCQK). R260 acts as the Proton donor; for delta-elimination activity in catalysis.

It belongs to the FPG family. Monomer. Requires Zn(2+) as cofactor.

The enzyme catalyses Hydrolysis of DNA containing ring-opened 7-methylguanine residues, releasing 2,6-diamino-4-hydroxy-5-(N-methyl)formamidopyrimidine.. It catalyses the reaction 2'-deoxyribonucleotide-(2'-deoxyribose 5'-phosphate)-2'-deoxyribonucleotide-DNA = a 3'-end 2'-deoxyribonucleotide-(2,3-dehydro-2,3-deoxyribose 5'-phosphate)-DNA + a 5'-end 5'-phospho-2'-deoxyribonucleoside-DNA + H(+). Involved in base excision repair of DNA damaged by oxidation or by mutagenic agents. Acts as a DNA glycosylase that recognizes and removes damaged bases. Has a preference for oxidized purines, such as 7,8-dihydro-8-oxoguanine (8-oxoG). Has AP (apurinic/apyrimidinic) lyase activity and introduces nicks in the DNA strand. Cleaves the DNA backbone by beta-delta elimination to generate a single-strand break at the site of the removed base with both 3'- and 5'-phosphates. The sequence is that of Formamidopyrimidine-DNA glycosylase from Bdellovibrio bacteriovorus (strain ATCC 15356 / DSM 50701 / NCIMB 9529 / HD100).